The sequence spans 114 residues: Chaperonin GroEL (114 aa).

22-26 (DGTTT) contributes to the ATP binding site.

Belongs to the chaperonin (HSP60) family. Forms a cylinder of 14 subunits composed of two heptameric rings stacked back-to-back. Interacts with the co-chaperonin GroES.

It is found in the cytoplasm. It carries out the reaction ATP + H2O + a folded polypeptide = ADP + phosphate + an unfolded polypeptide.. Its function is as follows. Together with its co-chaperonin GroES, plays an essential role in assisting protein folding. The GroEL-GroES system forms a nano-cage that allows encapsulation of the non-native substrate proteins and provides a physical environment optimized to promote and accelerate protein folding. The sequence is that of Chaperonin GroEL from Mycobacterium ulcerans.